Consider the following 603-residue polypeptide: Leucine-rich repeat-containing protein 40 (603 aa).

Residues 1-27 (MAAARRARAGDPRAGFRRAAEEQSPAV) are disordered. LRR repeat units lie at residues 83 to 104 (DLTKLILASNQLRCLSEDVRLL), 106 to 127 (ALTVLDVHDNQLTSLPSALGQL), 129 to 150 (NLQKLDVSHNKLKSIPEELLQL), 152 to 173 (HLKGLLLQHNELSHLPDGFGQL), 175 to 196 (SLEELDLSNNHLTDIPKSFALL), 198 to 219 (NLVRLNLACNQLKDLPADISAM), 221 to 242 (SLRQLDCTKNYLESVPSELASM), 244 to 265 (SLEQLYLRKNKLRSLPELPSCK), 266 to 286 (LLKELHAGENQIEILNAENLK), 290 to 311 (SLSVLELRDNKIKSVPDEITLL), 313 to 335 (KLERLDLANNDISRLPYTLGNLS), 336 to 357 (QLKFLALEGNPLRTIRRDLLQK), 401 to 422 (TLKLLDYSEKQVAVIPDDVFSA), 427 to 449 (PVTSVNFSKNQLTAIPPRIVELK), 451 to 473 (SVCDVNFGFNKISSVSLELCTLH), 474 to 495 (KLTHLDIRNNVLTSLPEEMEAL), 497 to 518 (RLQVINLSFNRFKVFPSVLYRM), 520 to 541 (ALETILLSNNQVGSIDPLQLKK), 544 to 565 (QLGTLDLQNNDLLQVPPELGNC), and 567 to 588 (TLRTLLLEGNPFRTPRAAILAK).

This Gallus gallus (Chicken) protein is Leucine-rich repeat-containing protein 40 (LRRC40).